The primary structure comprises 2259 residues: Golgin subfamily A member 4 (2259 aa).

The interval methionine 1 to glutamate 54 is disordered. Serine 10 is subject to Phosphoserine. Low complexity predominate over residues glutamate 12 to serine 41. Threonine 39 is subject to Phosphothreonine. Phosphoserine is present on residues serine 41, serine 104, and serine 111. Residues serine 165–lysine 235 form an interaction with MACF1 region. Positions serine 167–alanine 2182 form a coiled coil. 2 stretches are compositionally biased toward basic and acidic residues: residues leucine 1932–glutamate 1946 and aspartate 1954–glutamate 1977. The tract at residues leucine 1932–glutamate 1977 is disordered. The region spanning leucine 2199–arginine 2246 is the GRIP domain.

In terms of assembly, homodimer. Interacts with GTP-bound ARL1 and ARL3. Interacts with MACF1. Directly interacts with TBC1D23. Interacts with FAM91A1; this interaction may be mediated by TBC1D23. In terms of tissue distribution, expressed in the head of epididymal sperm but not in testicular sperm (at protein level).

It localises to the cytoplasm. It is found in the golgi apparatus membrane. The protein localises to the golgi apparatus. The protein resides in the trans-Golgi network membrane. Its function is as follows. Involved in vesicular trafficking at the Golgi apparatus level. May play a role in delivery of transport vesicles containing GPI-linked proteins from the trans-Golgi network through its interaction with MACF1. Involved in endosome-to-Golgi trafficking. This Rattus norvegicus (Rat) protein is Golgin subfamily A member 4.